Reading from the N-terminus, the 434-residue chain is MSHDQRSPSEEVSRTALSKPASESTIVGDGHHPLPAKDTSTRAWLVVVGGLLIYFPTFGFLNAFGTFQTFYVQDLLAGTSSSKIAWIGSLQIFLLFIGGLVVGPLYDKVGATKLLVPGSVVYVVALMLTSVCKKYYQLILAQGILFGCANALLFYPTIAAINQWFDRRRGIALGLAVSGSSLGGIFWTEIIQLMLDHIGFGWTVRACGFISLAFLVPSCVLIITRPPEPGESKDMQLDFKAIFTDTKYLLFSVGMLLVLWGMFIPFFYLPSYGETYGMSVTGANNLLAYMNAGSFVGRVLTGLMADRLGRFNVISLAALSCGILLFCLHKITTSGAIIAFSTLYGICSGGLISLQSACIGQITPDHSIIGVKIGLMMGFCSVGGLTGSPIAGALLSADHQKWYGFIDFCGSILMGGAVVTILSRYVAAPREWKF.

A compositionally biased stretch (basic and acidic residues) spans 1–13 (MSHDQRSPSEEVS). Residues 1-34 (MSHDQRSPSEEVSRTALSKPASESTIVGDGHHPL) are disordered. 12 helical membrane-spanning segments follow: residues 44 to 64 (WLVV…LNAF), 84 to 104 (IAWI…VVGP), 109 to 129 (VGAT…LMLT), 138 to 158 (LILA…YPTI), 171 to 191 (IALG…TEII), 203 to 223 (TVRA…VLII), 249 to 269 (LLFS…FFYL), 280 to 302 (VTGA…VLTG), 311 to 331 (FNVI…LHKI), 334 to 354 (SGAI…LISL), 375 to 395 (LMMG…GALL), and 402 to 422 (WYGF…VTIL).

This sequence belongs to the major facilitator superfamily. Monocarboxylate porter (TC 2.A.1.13) family.

It is found in the cell membrane. MFS-type transporter; part of the gene cluster that mediates the biosynthesis of pyranonigrins, a family of antioxidative compounds. May be involved in the secretion of pyranonigrins. The protein is MFS-type transporter pynF of Aspergillus niger (strain ATCC MYA-4892 / CBS 513.88 / FGSC A1513).